The chain runs to 221 residues: Nucleolar protein 3 (221 aa).

The N-myristoyl glycine moiety is linked to residue glycine 2. The CARD domain maps to 4-95 (MQERPSETID…MPDPAWDWQH (92 aa)). Residues 20-70 (VETLQADSGLLLDALVARGVLTGPEYEALDALPDAERRVRRLLLLVQSKGE) are essential for interaction with BAX. The interval 107–221 (PPCPGHWTPE…GDESEGCENT (115 aa)) is disordered. A compositionally biased stretch (acidic residues) spans 132-143 (EEEEIGGPEDSE). Phosphothreonine; by CK2 is present on threonine 149. Acidic residues-rich tracts occupy residues 165–201 (PDLEQEMEPEPEPEVEPEPEPEPEPEPEPEPEPEPEP) and 209–221 (FQEGDESEGCENT).

Oligomerizes (via CARD doamin). Interacts (via CARD domain) with CASP2; inhibits CASP2 activity in a phosphorylation-dependent manner. Interacts with CASP8; decreases CASP8 activity in a mitochondria localization- and phosphorylation-dependent manner and this interaction is dissociated by calcium. Interacts with TFPT; translocates NOL3 into the nucleus and negatively regulated TFPT-induced cell death. Interacts directly (via CARD domain) with FAS and FADD (via DED domain); inhibits death-inducing signaling complex (DISC) assembly by inhibiting the increase in FAS-FADD binding induced by FAS activation. Interacts (via CARD domain) with BAX (via a C-terminal 33 residues); inhibits BAX activation and translocation and consequently cytochrome c release from mitochondria. Interacts with PPM1G; may dephosphorylate NOL3. Interacts (via CARD domain) with BBC3 (via BH3 domain); preventing the association of BBC3 with BCL2 and resulting in activation of CASP8. Interacts (via CARD domain) with BAD(via BH3 domain); preventing the association of BAD with BCL2. Interacts directly (via CARD domain) with TNFRSF1A; inhibits TNF-signaling pathway. Phosphorylation at Thr-149 is required for its antiapoptotic effect by blocking death-inducing signaling complex (DISC) activity through the control of interaction with CASP8. Phosphorylation at Thr-149 results in translocation to mitochondria and this translocation enables the binding to CASP8. Dephosphorylated at Thr-149 by calcineurin; doesn't inhibit the association between FADD and CASP8 and the consequent apoptosis. In terms of processing, polyubiquitinated by MDM2; promoting proteasomal-dependent degradation in response to apoptotic stimuli. In terms of tissue distribution, highly expressed in skeletal muscle, heart and medulla.

It is found in the cytoplasm. The protein resides in the mitochondrion. The protein localises to the sarcoplasmic reticulum. Its subcellular location is the membrane. Apoptosis repressor that blocks multiple modes of cell death. Inhibits extrinsic apoptotic pathways through two different ways. Firstly by interacting with FAS and FADD upon FAS activation blocking death-inducing signaling complex (DISC) assembly. Secondly by interacting with CASP8 in a mitochondria localization- and phosphorylation-dependent manner, limiting the amount of soluble CASP8 available for DISC-mediated activation. Inhibits intrinsic apoptotic pathway in response to a wide range of stresses, through its interaction with BAX resulting in BAX inactivation, preventing mitochondrial dysfunction and release of pro-apoptotic factors. Inhibits calcium-mediated cell death by functioning as a cytosolic calcium buffer, dissociating its interaction with CASP8 and maintaining calcium homeostasis. Negatively regulates oxidative stress-induced apoptosis by phosphorylation-dependent suppression of the mitochondria-mediated intrinsic pathway, by blocking CASP2 activation and BAX translocation. Negatively regulates hypoxia-induced apoptosis in part by inhibiting the release of cytochrome c from mitochondria in a caspase-independent manner. Also inhibits TNF-induced necrosis by preventing TNF-signaling pathway through TNFRSF1A interaction abrogating the recruitment of RIPK1 to complex I. Finally through its role as apoptosis repressor, promotes vascular remodeling through inhibition of apoptosis and stimulation of proliferation, in response to hypoxia. Inhibits too myoblast differentiation through caspase inhibition. This is Nucleolar protein 3 (Nol3) from Rattus norvegicus (Rat).